The sequence spans 790 residues: LMBR1 domain-containing protein 2 homolog B (790 aa).

The segment covering 1 to 21 (MSSNTTTPTPTSTPTPTSSPS) has biased composition (low complexity). Residues 1 to 22 (MSSNTTTPTPTSTPTPTSSPSI) are disordered. The next 5 membrane-spanning stretches (helical) occupy residues 34-54 (FGNL…VLIG), 66-86 (IYAT…AYLV), 128-148 (FLYF…QSFS), 167-187 (VILY…ILSV), and 195-215 (FLSF…TITM). Positions 236–266 (LRNYRVEAVVLKTELEDVKRQLIDHLKLIKT) form a coiled coil. 3 helical membrane passes run 401 to 421 (FIIA…SEIV), 442 to 462 (PGIG…VCSY), and 539 to 559 (FTLF…FNLH). Disordered stretches follow at residues 630 to 665 (SQLD…PKLS), 701 to 751 (LGEK…TKDK), and 765 to 790 (SFQD…KNKK). Residues 644-665 (IDSSNRYKPTPTKTSINIPKLS) are compositionally biased toward polar residues. Low complexity predominate over residues 706-734 (NASNNNNNNNNNNNNNNSNNKNSNNNNNS). Polar residues predominate over residues 735–746 (ILTSNYESYSTP). Over residues 766-778 (FQDDDDHTFDDIE) the composition is skewed to acidic residues.

It belongs to the LIMR family.

The protein localises to the membrane. The sequence is that of LMBR1 domain-containing protein 2 homolog B from Dictyostelium discoideum (Social amoeba).